A 299-amino-acid chain; its full sequence is tRNA dimethylallyltransferase (299 aa).

11–18 is a binding site for ATP; that stretch reads GPTAVGKT. 13 to 18 provides a ligand contact to substrate; that stretch reads TAVGKT. The interaction with substrate tRNA stretch occupies residues 36 to 39; the sequence is DSQQ.

The protein belongs to the IPP transferase family. As to quaternary structure, monomer. It depends on Mg(2+) as a cofactor.

The catalysed reaction is adenosine(37) in tRNA + dimethylallyl diphosphate = N(6)-dimethylallyladenosine(37) in tRNA + diphosphate. Its function is as follows. Catalyzes the transfer of a dimethylallyl group onto the adenine at position 37 in tRNAs that read codons beginning with uridine, leading to the formation of N6-(dimethylallyl)adenosine (i(6)A). The chain is tRNA dimethylallyltransferase from Streptococcus pyogenes serotype M49 (strain NZ131).